A 494-amino-acid polypeptide reads, in one-letter code: UDP-N-acetylmuramoyl-L-alanyl-D-glutamate--L-lysine ligase (494 aa).

S30 is a binding site for UDP-N-acetyl-alpha-D-muramoyl-L-alanyl-D-glutamate. 110–116 contributes to the ATP binding site; the sequence is GTNGKTS. Residues 152–153, S179, and R187 each bind UDP-N-acetyl-alpha-D-muramoyl-L-alanyl-D-glutamate; that span reads TT. The residue at position 219 (K219) is an N6-carboxylysine. Residues 406–409 carry the L-lysine recognition motif motif; that stretch reads DNPA.

It belongs to the MurCDEF family. MurE subfamily. In terms of processing, carboxylation is probably crucial for Mg(2+) binding and, consequently, for the gamma-phosphate positioning of ATP.

Its subcellular location is the cytoplasm. The enzyme catalyses UDP-N-acetyl-alpha-D-muramoyl-L-alanyl-D-glutamate + L-lysine + ATP = UDP-N-acetyl-alpha-D-muramoyl-L-alanyl-gamma-D-glutamyl-L-lysine + ADP + phosphate + H(+). It functions in the pathway cell wall biogenesis; peptidoglycan biosynthesis. Functionally, catalyzes the addition of L-lysine to the nucleotide precursor UDP-N-acetylmuramoyl-L-alanyl-D-glutamate (UMAG) in the biosynthesis of bacterial cell-wall peptidoglycan. The sequence is that of UDP-N-acetylmuramoyl-L-alanyl-D-glutamate--L-lysine ligase from Staphylococcus epidermidis (strain ATCC 35984 / DSM 28319 / BCRC 17069 / CCUG 31568 / BM 3577 / RP62A).